Reading from the N-terminus, the 312-residue chain is Methionyl-tRNA formyltransferase (312 aa).

110-113 (SLLP) contacts (6S)-5,6,7,8-tetrahydrofolate.

It belongs to the Fmt family.

The catalysed reaction is L-methionyl-tRNA(fMet) + (6R)-10-formyltetrahydrofolate = N-formyl-L-methionyl-tRNA(fMet) + (6S)-5,6,7,8-tetrahydrofolate + H(+). Attaches a formyl group to the free amino group of methionyl-tRNA(fMet). The formyl group appears to play a dual role in the initiator identity of N-formylmethionyl-tRNA by promoting its recognition by IF2 and preventing the misappropriation of this tRNA by the elongation apparatus. This is Methionyl-tRNA formyltransferase from Mycobacterium ulcerans (strain Agy99).